Reading from the N-terminus, the 33-residue chain is Photosystem II reaction center protein Psb30 (33 aa).

The chain crosses the membrane as a helical span at residues 8 to 28; sequence QLGSLLLITVAGPLIVFFLFI.

Belongs to the Psb30/Ycf12 family. PSII is composed of 1 copy each of membrane proteins PsbA, PsbB, PsbC, PsbD, PsbE, PsbF, PsbH, PsbI, PsbJ, PsbK, PsbL, PsbM, PsbT, PsbY, PsbZ, Psb30/Ycf12, peripheral proteins of the oxygen-evolving complex and a large number of cofactors. It forms dimeric complexes.

The protein localises to the plastid. Its subcellular location is the chloroplast thylakoid membrane. In terms of biological role, a core subunit of photosystem II (PSII), probably helps stabilize the reaction center. The polypeptide is Photosystem II reaction center protein Psb30 (Euglena anabaena (Euglenaria anabaena)).